Consider the following 70-residue polypeptide: Cold shock-like protein (70 aa).

In terms of domain architecture, CSD spans 5–65; it reads GTVKWFSKDK…DTKGPRAKNV (61 aa).

It localises to the cytoplasm. In Aquifex aeolicus (strain VF5), this protein is Cold shock-like protein (csp).